The following is a 201-amino-acid chain: Recombination protein RecR (201 aa).

The C4-type zinc-finger motif lies at 58–73; sequence CGRCGALTDVDPCGIC. Residues 81–178 enclose the Toprim domain; that stretch reads ETLCLVSEWD…RVTRLAQGIP (98 aa).

The protein belongs to the RecR family.

May play a role in DNA repair. It seems to be involved in an RecBC-independent recombinational process of DNA repair. It may act with RecF and RecO. The chain is Recombination protein RecR from Nitratidesulfovibrio vulgaris (strain DSM 19637 / Miyazaki F) (Desulfovibrio vulgaris).